Reading from the N-terminus, the 207-residue chain is Protein-L-isoaspartate O-methyltransferase (207 aa).

Ser-56 is an active-site residue.

The protein belongs to the methyltransferase superfamily. L-isoaspartyl/D-aspartyl protein methyltransferase family.

Its subcellular location is the cytoplasm. The enzyme catalyses [protein]-L-isoaspartate + S-adenosyl-L-methionine = [protein]-L-isoaspartate alpha-methyl ester + S-adenosyl-L-homocysteine. Catalyzes the methyl esterification of L-isoaspartyl residues in peptides and proteins that result from spontaneous decomposition of normal L-aspartyl and L-asparaginyl residues. It plays a role in the repair and/or degradation of damaged proteins. The chain is Protein-L-isoaspartate O-methyltransferase from Pyrobaculum neutrophilum (strain DSM 2338 / JCM 9278 / NBRC 100436 / V24Sta) (Thermoproteus neutrophilus).